The following is a 363-amino-acid chain: Mitochondrial RNA-splicing protein MRS1 (363 aa).

In terms of assembly, homodimer. Forms a ribonucleoprotein complex composed of maturase bI3 and 2 dimers of MRS1 that assemble around the bI3 RNA.

Its subcellular location is the mitochondrion matrix. Function in mitochondrial RNA splicing in the excision of mitochondrial group I introns aI5 beta from COX1 and bI3 from COB transcripts and thus would be involved in obtaining the correct structure of the intron, to allow the RNA catalyzed reactions to occur. The sequence is that of Mitochondrial RNA-splicing protein MRS1 (MRS1) from Saccharomyces cerevisiae (strain ATCC 204508 / S288c) (Baker's yeast).